Here is a 90-residue protein sequence, read N- to C-terminus: Putative septation protein SpoVG (90 aa).

This sequence belongs to the SpoVG family.

Functionally, could be involved in septation. This is Putative septation protein SpoVG from Clostridium perfringens (strain ATCC 13124 / DSM 756 / JCM 1290 / NCIMB 6125 / NCTC 8237 / Type A).